Reading from the N-terminus, the 223-residue chain is Agamous-like MADS-box protein AGL11 (223 aa).

The region spanning 1-61 is the MADS-box domain; it reads MGRGKIEIKR…GRVYEYSNNN (61 aa). A K-box domain is found at 87 to 177; it reads AQYYQQESAK…RTKIAEVERL (91 aa).

In terms of tissue distribution, expressed in flowers and seeds. Expressed in endotesta cell layer of developing seeds.

It localises to the nucleus. Its function is as follows. Probable transcription factor involved in seed development. Plays a role in seed morphogenesis by promoting the correct development of endotesta cell layer, which directs the further development of the seed coat, the endosperm, and consequently the embryo. The sequence is that of Agamous-like MADS-box protein AGL11 from Vitis vinifera (Grape).